The chain runs to 565 residues: MVAEDAPVRATCRVLFRTTTLIFLCTLLALSISILYESLITQKQIMSQAGSTGSNSGLGSITDLLNNILSVANQIIYNSAVALPLQLDTLESTLLTAIKSLQTSDKLEQNCSWSAALINDNRYINGINQFYFSIAEGRNLTLGPLLNMPSFIPTATTPEGCTRIPSFSLTKTHWCYTHNVILNGCQDHVSSNQFVSMGIIEPTSAGFPFFRTLKTLYLSDGVNRKSCSISTVPGGCMMYCFVSTQPERDDYFSAAPPEQRIIIMYYNDTIVERIINPPGVLDVWATLNPGTGSGVYYLGWVLFPIYGGVIKGTSLWNNQANKYFIPQMVAALCSQNQATQVQNAKSSYYSSWFGNRMIQSGILACPLRQDLTNECLVLPFSNDQVLMGAEGRLYMYGDSVYYYQRSNSWWPMTMLYKVTITFTNGQPSAISAQNVPTQQVPRPGTGDCSATNRCPGFCLTGVYADAWLLTNPSSTSTFGSEATFTGSYLNTATQRINPTMYIANNTQIISSQQFGSSGQEAAYGHTTCFRDTGSVMVYCIYIIELSSSLLGQFQIVPFIRQVTLS.

Topologically, residues 1–19 are intravirion; it reads MVAEDAPVRATCRVLFRTT. The helical transmembrane segment at 20 to 40 threads the bilayer; sequence TLIFLCTLLALSISILYESLI. Over 41-565 the chain is Virion surface; sequence TQKQIMSQAG…VPFIRQVTLS (525 aa). Residue N139 is glycosylated (N-linked (GlcNAc...) asparagine; by host). Disulfide bonds link C161–C185, C175–C236, and C227–C240. Residues 223 to 228 are involved in neuraminidase activity; the sequence is NRKSCS. N-linked (GlcNAc...) asparagine; by host glycosylation is present at N267. 3 disulfides stabilise this stretch: C333-C454, C365-C375, and C448-C458. Residue N504 is glycosylated (N-linked (GlcNAc...) asparagine; by host). C528 and C539 are disulfide-bonded.

The protein belongs to the paramyxoviruses hemagglutinin-neuraminidase family. As to quaternary structure, homotetramer; composed of disulfide-linked homodimers. Interacts with F protein trimer.

The protein localises to the virion membrane. It is found in the host cell membrane. It catalyses the reaction Hydrolysis of alpha-(2-&gt;3)-, alpha-(2-&gt;6)-, alpha-(2-&gt;8)- glycosidic linkages of terminal sialic acid residues in oligosaccharides, glycoproteins, glycolipids, colominic acid and synthetic substrates.. In terms of biological role, attaches the virus to sialic acid-containing cell receptors and thereby initiating infection. Binding of HN protein to the receptor induces a conformational change that allows the F protein to trigger virion/cell membranes fusion. Its function is as follows. Neuraminidase activity ensures the efficient spread of the virus by dissociating the mature virions from the neuraminic acid containing glycoproteins. The chain is Hemagglutinin-neuraminidase (HN) from Canis lupus familiaris (Dog).